The chain runs to 443 residues: tRNA modification GTPase MnmE (443 aa).

Residues Arg-23, Glu-82, and Lys-121 each coordinate (6S)-5-formyl-5,6,7,8-tetrahydrofolate. In terms of domain architecture, TrmE-type G spans 215–364 (GTSIVLAGHP…LKQFIQKWIQ (150 aa)). Residue Asn-225 participates in K(+) binding. Residues 225 to 230 (NAGKSS), 244 to 250 (TDIPGTT), and 269 to 272 (DSAG) each bind GTP. Ser-229 is a Mg(2+) binding site. The K(+) site is built by Thr-244, Ile-246, and Thr-249. Thr-250 serves as a coordination point for Mg(2+). (6S)-5-formyl-5,6,7,8-tetrahydrofolate is bound at residue Lys-443.

This sequence belongs to the TRAFAC class TrmE-Era-EngA-EngB-Septin-like GTPase superfamily. TrmE GTPase family. In terms of assembly, homodimer. Heterotetramer of two MnmE and two MnmG subunits. K(+) is required as a cofactor.

The protein resides in the cytoplasm. Functionally, exhibits a very high intrinsic GTPase hydrolysis rate. Involved in the addition of a carboxymethylaminomethyl (cmnm) group at the wobble position (U34) of certain tRNAs, forming tRNA-cmnm(5)s(2)U34. The chain is tRNA modification GTPase MnmE from Chlamydia felis (strain Fe/C-56) (Chlamydophila felis).